The primary structure comprises 332 residues: tRNA U34 carboxymethyltransferase (332 aa).

Residues Lys91, Trp105, Lys110, Gly130, 152-154 (DPS), 181-182 (IE), Met196, Tyr200, and Arg315 contribute to the carboxy-S-adenosyl-L-methionine site.

Belongs to the class I-like SAM-binding methyltransferase superfamily. CmoB family. As to quaternary structure, homotetramer.

It catalyses the reaction carboxy-S-adenosyl-L-methionine + 5-hydroxyuridine(34) in tRNA = 5-carboxymethoxyuridine(34) in tRNA + S-adenosyl-L-homocysteine + H(+). Its function is as follows. Catalyzes carboxymethyl transfer from carboxy-S-adenosyl-L-methionine (Cx-SAM) to 5-hydroxyuridine (ho5U) to form 5-carboxymethoxyuridine (cmo5U) at position 34 in tRNAs. In Shewanella putrefaciens (strain CN-32 / ATCC BAA-453), this protein is tRNA U34 carboxymethyltransferase.